A 132-amino-acid chain; its full sequence is Ribonuclease P protein component (132 aa).

The protein belongs to the RnpA family. Consists of a catalytic RNA component (M1 or rnpB) and a protein subunit.

The catalysed reaction is Endonucleolytic cleavage of RNA, removing 5'-extranucleotides from tRNA precursor.. Functionally, RNaseP catalyzes the removal of the 5'-leader sequence from pre-tRNA to produce the mature 5'-terminus. It can also cleave other RNA substrates such as 4.5S RNA. The protein component plays an auxiliary but essential role in vivo by binding to the 5'-leader sequence and broadening the substrate specificity of the ribozyme. The sequence is that of Ribonuclease P protein component from Marinobacter nauticus (strain ATCC 700491 / DSM 11845 / VT8) (Marinobacter aquaeolei).